We begin with the raw amino-acid sequence, 120 residues long: uncharacterized protein (120 aa).

The protein localises to the cytoplasm. It is found in the nucleus. This is an uncharacterized protein from Schizosaccharomyces pombe (strain 972 / ATCC 24843) (Fission yeast).